The primary structure comprises 176 residues: ATP-dependent protease subunit HslV (176 aa).

The active site involves Thr-2. Residues Gly-157, Cys-160, and Thr-163 each contribute to the Na(+) site.

This sequence belongs to the peptidase T1B family. HslV subfamily. As to quaternary structure, a double ring-shaped homohexamer of HslV is capped on each side by a ring-shaped HslU homohexamer. The assembly of the HslU/HslV complex is dependent on binding of ATP.

It is found in the cytoplasm. The catalysed reaction is ATP-dependent cleavage of peptide bonds with broad specificity.. Its activity is regulated as follows. Allosterically activated by HslU binding. In terms of biological role, protease subunit of a proteasome-like degradation complex believed to be a general protein degrading machinery. The chain is ATP-dependent protease subunit HslV from Photorhabdus laumondii subsp. laumondii (strain DSM 15139 / CIP 105565 / TT01) (Photorhabdus luminescens subsp. laumondii).